The sequence spans 101 residues: DNA-binding protein Fis (101 aa).

The H-T-H motif DNA-binding region spans 77-96; it reads QTRAANMLGINRGTLRKKLK.

This sequence belongs to the transcriptional regulatory Fis family. Homodimer.

Its function is as follows. Activates ribosomal RNA transcription. Plays a direct role in upstream activation of rRNA promoters. The protein is DNA-binding protein Fis of Shewanella denitrificans (strain OS217 / ATCC BAA-1090 / DSM 15013).